The primary structure comprises 1167 residues: DNA-directed RNA polymerase subunit beta (1167 aa).

The protein belongs to the RNA polymerase beta chain family. In terms of assembly, the RNAP catalytic core consists of 2 alpha, 1 beta, 1 beta' and 1 omega subunit. When a sigma factor is associated with the core the holoenzyme is formed, which can initiate transcription.

It catalyses the reaction RNA(n) + a ribonucleoside 5'-triphosphate = RNA(n+1) + diphosphate. In terms of biological role, DNA-dependent RNA polymerase catalyzes the transcription of DNA into RNA using the four ribonucleoside triphosphates as substrates. The protein is DNA-directed RNA polymerase subunit beta of Treponema denticola (strain ATCC 35405 / DSM 14222 / CIP 103919 / JCM 8153 / KCTC 15104).